Here is a 968-residue protein sequence, read N- to C-terminus: RNA polymerase-associated protein RapA (968 aa).

The Helicase ATP-binding domain maps to 164–334 (DVGRRHAPRV…FARLRLLDPN (171 aa)). 177–184 (DEVGLGKT) lines the ATP pocket. Residues 280–283 (DEAH) carry the DEAH box motif. The Helicase C-terminal domain occupies 490–662 (RVEWLMGYLT…YLASPDETEG (173 aa)).

Belongs to the SNF2/RAD54 helicase family. RapA subfamily. As to quaternary structure, interacts with the RNAP. Has a higher affinity for the core RNAP than for the holoenzyme. Its ATPase activity is stimulated by binding to RNAP.

Transcription regulator that activates transcription by stimulating RNA polymerase (RNAP) recycling in case of stress conditions such as supercoiled DNA or high salt concentrations. Probably acts by releasing the RNAP, when it is trapped or immobilized on tightly supercoiled DNA. Does not activate transcription on linear DNA. Probably not involved in DNA repair. This Escherichia coli O127:H6 (strain E2348/69 / EPEC) protein is RNA polymerase-associated protein RapA.